Consider the following 505-residue polypeptide: Trans-cinnamate 4-monooxygenase (505 aa).

Residues 3–23 (LLLLEKSLIAVFVAVILATVI) traverse the membrane as a helical segment. Residues 213-218 (RSRLAQ) and A306 contribute to the (E)-cinnamate site. Heme is bound at residue C447.

It belongs to the cytochrome P450 family. Heme is required as a cofactor. As to expression, expressed in roots, leaves, stems, flowers and siliques.

Its subcellular location is the membrane. It catalyses the reaction (E)-cinnamate + reduced [NADPH--hemoprotein reductase] + O2 = (E)-4-coumarate + oxidized [NADPH--hemoprotein reductase] + H2O + H(+). The protein operates within phenylpropanoid metabolism; trans-4-coumarate biosynthesis; trans-4-coumarate from trans-cinnamate: step 1/1. In terms of biological role, catalyzes the first oxidative step of the phenylpropanoid pathway in higher plants by transforming trans-cinnamate into p-coumarate. The compounds formed by this pathway are essential components for lignification, pollination, and defense against ultraviolet light, predators and pathogens. This is Trans-cinnamate 4-monooxygenase from Arabidopsis thaliana (Mouse-ear cress).